The primary structure comprises 255 residues: tRNA (guanine-N(1)-)-methyltransferase (255 aa).

S-adenosyl-L-methionine-binding positions include Gly113 and 133–138 (IGDYVL).

Belongs to the RNA methyltransferase TrmD family. As to quaternary structure, homodimer.

It is found in the cytoplasm. The enzyme catalyses guanosine(37) in tRNA + S-adenosyl-L-methionine = N(1)-methylguanosine(37) in tRNA + S-adenosyl-L-homocysteine + H(+). In terms of biological role, specifically methylates guanosine-37 in various tRNAs. The sequence is that of tRNA (guanine-N(1)-)-methyltransferase from Salmonella paratyphi A (strain ATCC 9150 / SARB42).